Here is a 171-residue protein sequence, read N- to C-terminus: UPF0303 protein YPTS_2661 (171 aa).

It belongs to the UPF0303 family.

The chain is UPF0303 protein YPTS_2661 from Yersinia pseudotuberculosis serotype IB (strain PB1/+).